Here is a 484-residue protein sequence, read N- to C-terminus: GDP-mannose transporter (484 aa).

Basic and acidic residues-rich tracts occupy residues 1-12 (MSMTTSRERNVP) and 19-28 (ELGRSRHSDV). Positions 1-34 (MSMTTSRERNVPPDDNEIELGRSRHSDVAPESES) are disordered. The Cytoplasmic portion of the chain corresponds to 1–60 (MSMTTSRERNVPPDDNEIELGRSRHSDVAPESESPQAHLLNSDVASVTKNFMRNASHATA). A helical transmembrane segment spans residues 61–81 (NSGAIAAVLSYCIASISMTVI). Topologically, residues 82–90 (NKFTVSGEK) are lumenal. Residues 91–111 (FTMNLLVLLCQCSVGVAMVYA) traverse the membrane as a helical segment. Topologically, residues 112–129 (AKCMGWIQIRTLNMRDVK) are cytoplasmic. The helical transmembrane segment at 130–150 (TWFPISTMLVFVIYTGSKALQ) threads the bilayer. Residues 151–155 (HMDIP) are Lumenal-facing. Residues 156–176 (IYTIFKNLTIILIAYGELLWF) form a helical membrane-spanning segment. Over 177–179 (NGR) the chain is Cytoplasmic. A helical membrane pass occupies residues 180-200 (ITPMVFLSFILMVLSSIIAAW). Residues 201–287 (PDLAPSTAKT…ASSSTLSSWS (87 aa)) lie on the Lumenal side of the membrane. The helical transmembrane segment at 288–308 (TNGYVWMLANCMISATYVLVM) threads the bilayer. Topologically, residues 309 to 321 (RKRIKLTGFKDWD) are cytoplasmic. A helical membrane pass occupies residues 322-342 (TMFYNNLLSIPVLLFMSLLVE). Asn-343 carries an N-linked (GlcNAc...) asparagine glycan. At 343-360 (NWSVETFEHNFPREKRST) the chain is on the lumenal side. Residues 361 to 381 (LVFAILLSGTGGVFISYTTAW) traverse the membrane as a helical segment. The Cytoplasmic portion of the chain corresponds to 382 to 390 (CIRVTSSTT). A helical membrane pass occupies residues 391–411 (YSMVGALNKLPLALSGMLFFG). Over 412–413 (NP) the chain is Lumenal. Residues 414 to 434 (VTPYNSIGVAVGFIAGIVYAV) traverse the membrane as a helical segment. Over 435 to 484 (GKYKQVVAARIANSDATGASTSLSSSSSAAPSGEYVFDLKGEIPTHTRQQ) the chain is Cytoplasmic.

The protein belongs to the TPT transporter family. SLC35D subfamily. As to quaternary structure, homooligomer.

The protein resides in the golgi apparatus membrane. It is found in the cytoplasmic vesicle membrane. Its subcellular location is the endoplasmic reticulum membrane. Its function is as follows. Involved in the import of GDP-mannose from the cytoplasm into the Golgi lumen. In Malassezia globosa (strain ATCC MYA-4612 / CBS 7966) (Dandruff-associated fungus), this protein is GDP-mannose transporter (VRG4).